A 520-amino-acid chain; its full sequence is Sensory neuron membrane protein 2 (520 aa).

Topologically, residues 1–7 (MLGKHSK) are cytoplasmic. Residues 8 to 28 (IFFGVSLIFLVIAIVLASWGF) form a helical membrane-spanning segment. Residues 29 to 468 (QKIVNKQIQK…DSHKLLGYVE (440 aa)) are Extracellular-facing. N-linked (GlcNAc...) asparagine glycans are attached at residues Asn-44, Asn-67, Asn-104, Asn-228, Asn-271, Asn-313, and Asn-342. 3 cysteine pairs are disulfide-bonded: Cys-267–Cys-337, Cys-298–Cys-361, and Cys-339–Cys-350. Residues 469 to 489 (VAKWFLLTIAIISVIASAVAV) traverse the membrane as a helical segment. Over 490-520 (ARANALLSWPRNSNSVSFILGPSVTQVNKGN) the chain is Cytoplasmic.

It belongs to the CD36 family. In terms of tissue distribution, localizes to cells surrounding the sensory neurons in the antenna. Associate in a ratio of 2:1 with the neurons expressing the other subtype SNMP1.

Its subcellular location is the cell membrane. Its function is as follows. Plays an olfactory role that is not restricted to pheromone sensitivity. May play a role in the elimination of lipophilic components from the sensillum lymph. The sequence is that of Sensory neuron membrane protein 2 from Heliothis virescens (Tobacco budworm moth).